The sequence spans 312 residues: Malate dehydrogenase (312 aa).

NAD(+) contacts are provided by residues 7–13 and Asp34; that span reads GASGGIG. The substrate site is built by Arg81 and Arg87. Residues Asn94 and 117–119 contribute to the NAD(+) site; that span reads ITN. Asn119 and Arg153 together coordinate substrate. The Proton acceptor role is filled by His177. Met227 contributes to the NAD(+) binding site.

It belongs to the LDH/MDH superfamily. MDH type 1 family. Homodimer.

It catalyses the reaction (S)-malate + NAD(+) = oxaloacetate + NADH + H(+). Functionally, catalyzes the reversible oxidation of malate to oxaloacetate. The chain is Malate dehydrogenase from Actinobacillus succinogenes (strain ATCC 55618 / DSM 22257 / CCUG 43843 / 130Z).